The sequence spans 156 residues: Transcription elongation factor GreA (156 aa).

The stretch at 1 to 32 (MKKVRLTREGYEKLKKELEDLKRKFMYEISER) forms a coiled coil.

This sequence belongs to the GreA/GreB family.

Functionally, necessary for efficient RNA polymerase transcription elongation past template-encoded arresting sites. The arresting sites in DNA have the property of trapping a certain fraction of elongating RNA polymerases that pass through, resulting in locked ternary complexes. Cleavage of the nascent transcript by cleavage factors such as GreA or GreB allows the resumption of elongation from the new 3'terminus. GreA releases sequences of 2 to 3 nucleotides. The polypeptide is Transcription elongation factor GreA (Thermotoga petrophila (strain ATCC BAA-488 / DSM 13995 / JCM 10881 / RKU-1)).